The following is a 171-amino-acid chain: uncharacterized protein (171 aa).

A disordered region spans residues 139-171 (ARKPTKSDDEEEEVGKMGGISSSINSWVQRQKL). Residues 158-171 (ISSSINSWVQRQKL) are compositionally biased toward polar residues.

This is an uncharacterized protein from Caenorhabditis elegans.